The sequence spans 314 residues: MDKFNPVDMSVWQGRQDPEDGELALRWHDKVQPWPQAGRAAPGVALVGFACDEGVRRNKGRVGAAGAPLAVRKLLANSAWHLGRPVYDRGDVNCEDGDLDAAHGRLAERVARLLDEGHFPLVLGGGHEVAFGSWSGLNRHLAGRGRVGIINFDAHFDLRMKLEQASSGTPFFQIAEQCAIQGTPFTYACLGVAETANTQALFARAEALGVWHVLDEAMTPAELPALLSGLDAFIARCDHLYLTIDLDVLPAAVMPGVSAPAARGVELAVIEPLIAHIRASGKLRLADLAEYNPSLDQDNRSARVAARLVHQLIK.

Mn(2+) contacts are provided by H127, D153, H155, D157, D245, and D247.

This sequence belongs to the arginase family. Mn(2+) is required as a cofactor.

It catalyses the reaction N-formimidoyl-L-glutamate + H2O = formamide + L-glutamate. Its pathway is amino-acid degradation; L-histidine degradation into L-glutamate; L-glutamate from N-formimidoyl-L-glutamate (hydrolase route): step 1/1. Catalyzes the conversion of N-formimidoyl-L-glutamate to L-glutamate and formamide. The polypeptide is Formimidoylglutamase (Aeromonas hydrophila subsp. hydrophila (strain ATCC 7966 / DSM 30187 / BCRC 13018 / CCUG 14551 / JCM 1027 / KCTC 2358 / NCIMB 9240 / NCTC 8049)).